A 400-amino-acid chain; its full sequence is 3-hydroxybenzoate 6-hydroxylase (400 aa).

The protein belongs to the 3-hydroxybenzoate 6-hydroxylase family. Monomer. It depends on FAD as a cofactor.

The catalysed reaction is 3-hydroxybenzoate + NADH + O2 + H(+) = 2,5-dihydroxybenzoate + NAD(+) + H2O. Functionally, catalyzes the NAD- or NADP-dependent conversion of 3-hydroxybenzoate to gentisate. The affinity of the enzyme toward NAD is twice as high as for NADP. In Polaromonas naphthalenivorans (strain CJ2), this protein is 3-hydroxybenzoate 6-hydroxylase (nagX).